Here is a 785-residue protein sequence, read N- to C-terminus: Endonuclease MutS2 (785 aa).

Residue 331–338 participates in ATP binding; it reads GPNTGGKT. A Smr domain is found at 710 to 785; sequence LDLRGLYADE…GLGVTVVELA (76 aa).

The protein belongs to the DNA mismatch repair MutS family. MutS2 subfamily. As to quaternary structure, homodimer. Binds to stalled ribosomes, contacting rRNA.

Endonuclease that is involved in the suppression of homologous recombination and thus may have a key role in the control of bacterial genetic diversity. Its function is as follows. Acts as a ribosome collision sensor, splitting the ribosome into its 2 subunits. Detects stalled/collided 70S ribosomes which it binds and splits by an ATP-hydrolysis driven conformational change. Acts upstream of the ribosome quality control system (RQC), a ribosome-associated complex that mediates the extraction of incompletely synthesized nascent chains from stalled ribosomes and their subsequent degradation. Probably generates substrates for RQC. This chain is Endonuclease MutS2, found in Pelotomaculum thermopropionicum (strain DSM 13744 / JCM 10971 / SI).